A 493-amino-acid polypeptide reads, in one-letter code: Cobyric acid synthase (493 aa).

Residues 246–440 (PIDIAVIKMP…IHGVFDGIVF (195 aa)) form the GATase cobBQ-type domain. Residue Cys-326 is the Nucleophile of the active site. The active site involves His-432.

Belongs to the CobB/CobQ family. CobQ subfamily.

It participates in cofactor biosynthesis; adenosylcobalamin biosynthesis. In terms of biological role, catalyzes amidations at positions B, D, E, and G on adenosylcobyrinic A,C-diamide. NH(2) groups are provided by glutamine, and one molecule of ATP is hydrogenolyzed for each amidation. This Clostridium botulinum (strain 657 / Type Ba4) protein is Cobyric acid synthase.